A 358-amino-acid chain; its full sequence is Trans-enoyl reductase pvhC (358 aa).

48-51 (VDSK) is a binding site for NADP(+). 134-141 (ISFLTSGL) serves as a coordination point for substrate. Residues 169–172 (SSSC), 192–195 (SPHN), Tyr-210, and 257–258 (LE) contribute to the NADP(+) site. Residue 278-282 (GPSLL) participates in substrate binding. 347–348 (VS) is an NADP(+) binding site.

It belongs to the zinc-containing alcohol dehydrogenase family. In terms of assembly, monomer.

It functions in the pathway secondary metabolite biosynthesis. Its function is as follows. Trans-enoyl reductase; part of the gene cluster that mediates the biosynthesis of varicidin A, an antifungal natural product containing a cis-octahydrodecalin core. The PKS module of pvhA together with the enoylreductase pvhC catalyze the formation of the polyketide unit which is then conjugated to L-isoleucine by the condensation domain of the NRPS module. Activity of the Dieckmann cyclase domain (RED) of pvhA results in release of an acyclic tetramate. The cytochrome P450 monooxygenase pvhE then catalyzes the oxidation of the C21 methyl group to a to carboxylate group. The methyltransferase pvhD then further methylates the pvhE product. The Diels-Alderase pvhB is able to catalyze Diels-Alder cycloaddition using both pvhE and pvhD products as substrates to form the decalin ring, yielding varicidin B and A, respectively. This is Trans-enoyl reductase pvhC from Talaromyces variabilis (Penicillium variabile).